A 132-amino-acid polypeptide reads, in one-letter code: Small ribosomal subunit protein uS8 (132 aa).

The protein belongs to the universal ribosomal protein uS8 family. As to quaternary structure, part of the 30S ribosomal subunit. Contacts proteins S5 and S12.

In terms of biological role, one of the primary rRNA binding proteins, it binds directly to 16S rRNA central domain where it helps coordinate assembly of the platform of the 30S subunit. The chain is Small ribosomal subunit protein uS8 from Borrelia turicatae (strain 91E135).